The following is a 124-amino-acid chain: MLLPLKESLESTLANVAKNETLFVAYLASVDPRTKQPWCPTVRAALPLFNNAFNSSKKLNVVHVYVGNMPQWKTPHNEFRVKFGISAVPTLGKYTRDAQGNLKTSLLVDYDCLDANKFSKFIDI.

Residues 37–124 (PWCPTVRAAL…ANKFSKFIDI (88 aa)) enclose the Thioredoxin domain. Cysteine 39 acts as the Nucleophile in catalysis.

It belongs to the thioredoxin family.

The protein resides in the cytoplasm. It localises to the nucleus. This is Thioredoxin domain-containing protein C21C3.12c from Schizosaccharomyces pombe (strain 972 / ATCC 24843) (Fission yeast).